The chain runs to 295 residues: MSWLSKLMPSGIRTENTPAKKRSVPEGLWEKCSNCGSALYGPELEENLEVCPKCDHHMAIRARARLNSLFDPDTATTEIAAQLGPVDALKFKDQKRYGERIKASQKASGEYDALIAMRGTLKGNPLVAAAFDFAFMGGSMGSVVGERFARAAEVALEVGCPFVCFSASGGARMQEGLFSLMQMAKTSAALGRLREAGLPYISVLTHPTTGGVSASFAMLGDINIAEPHALIGFAGPRVIEQTVRETLPEGFQRSEFLLDHGAIDQICDRHQLRDRIAELTAMMMRQPHPQDADAA.

The segment at 1–20 (MSWLSKLMPSGIRTENTPAK) is disordered. Positions 28 to 295 (LWEKCSNCGS…QPHPQDADAA (268 aa)) constitute a CoA carboxyltransferase N-terminal domain. The Zn(2+) site is built by C32, C35, C51, and C54. The C4-type zinc-finger motif lies at 32-54 (CSNCGSALYGPELEENLEVCPKC).

Belongs to the AccD/PCCB family. Acetyl-CoA carboxylase is a heterohexamer composed of biotin carboxyl carrier protein (AccB), biotin carboxylase (AccC) and two subunits each of ACCase subunit alpha (AccA) and ACCase subunit beta (AccD). Zn(2+) is required as a cofactor.

The protein localises to the cytoplasm. The enzyme catalyses N(6)-carboxybiotinyl-L-lysyl-[protein] + acetyl-CoA = N(6)-biotinyl-L-lysyl-[protein] + malonyl-CoA. The protein operates within lipid metabolism; malonyl-CoA biosynthesis; malonyl-CoA from acetyl-CoA: step 1/1. Component of the acetyl coenzyme A carboxylase (ACC) complex. Biotin carboxylase (BC) catalyzes the carboxylation of biotin on its carrier protein (BCCP) and then the CO(2) group is transferred by the transcarboxylase to acetyl-CoA to form malonyl-CoA. The chain is Acetyl-coenzyme A carboxylase carboxyl transferase subunit beta from Xanthomonas euvesicatoria pv. vesicatoria (strain 85-10) (Xanthomonas campestris pv. vesicatoria).